The sequence spans 1159 residues: ABC transporter G family member 24 (1159 aa).

Transmembrane regions (helical) follow at residues 11–31 and 415–435; these read FNSI…GNNC and VGSG…FLIF. Positions 454–707 constitute an ABC transporter domain; sequence LSFHNISCYV…FIKQKIAGMT (254 aa). 497-504 lines the ATP pocket; the sequence is GLSGSGKT. Residues 752–846 form a disordered region; it reads QSTSPALSSN…DNNNKNNDDD (95 aa). Composition is skewed to low complexity over residues 759–768 and 775–784; these read SSNSNNSDIN and INNPHNQNIH. Positions 785 to 795 are enriched in basic residues; sequence HQQHHHHHRHI. Over residues 822–841 the composition is skewed to low complexity; the sequence is DNINNNNNNNKVKNNDNNNK. The 253-residue stretch at 902–1154 folds into the ABC transmembrane type-2 domain; it reads FLLRTTYFVH…LLAYVFLRFL (253 aa). A run of 6 helical transmembrane segments spans residues 909-929, 937-957, 1005-1025, 1047-1067, 1074-1094, and 1135-1155; these read FVHI…PANL, FGAM…SLDL, YMIG…SLVL, ANMV…FLLA, YLIG…PVVN, and VLLG…RFLV.

Belongs to the ABC transporter superfamily. ABCG family. Eye pigment precursor importer (TC 3.A.1.204) subfamily.

Its subcellular location is the membrane. In Dictyostelium discoideum (Social amoeba), this protein is ABC transporter G family member 24 (abcG24).